Reading from the N-terminus, the 101-residue chain is A-type ATP synthase subunit F (101 aa).

The protein belongs to the V-ATPase F subunit family. Has multiple subunits, A(3), B(3), C, D, E, F, G, I and K(x); there may be a few other subunits as well.

It localises to the cell membrane. Component of the A-type ATP synthase that produces ATP from ADP in the presence of a proton gradient across the membrane. In Methanosarcina mazei (strain ATCC BAA-159 / DSM 3647 / Goe1 / Go1 / JCM 11833 / OCM 88) (Methanosarcina frisia), this protein is A-type ATP synthase subunit F.